The chain runs to 160 residues: Cathelin-related peptide SC5 (160 aa).

The signal sequence occupies residues 1–29 (METQRASLSLGRCSLWLLLLGLALPSASA). Positions 30–131 (QVLSYREAVL…DITCAEPQSV (102 aa)) are excised as a propeptide. Disulfide bonds link cysteine 86–cysteine 97 and cysteine 108–cysteine 125.

It belongs to the cathelicidin family.

The protein localises to the secreted. Its function is as follows. Broad spectrum bactericidal agent. The protein is Cathelin-related peptide SC5 of Ovis aries (Sheep).